We begin with the raw amino-acid sequence, 300 residues long: Exonuclease (300 aa).

The enzyme catalyses Exonucleolytic cleavage in the 5'- to 3'-direction to yield nucleoside 5'-phosphates.. Its function is as follows. Plays an essential role in phage DNA replication by participating in the removal of DNA-linked RNA primers. Participates also in T7 DNA packaging, host DNA degradation and phage genetic recombination. This Escherichia phage T7 (Bacteriophage T7) protein is Exonuclease.